The chain runs to 183 residues: ARS-binding factor 2, mitochondrial (183 aa).

Residues 1–26 (MNSYSLLTRSFHESSKPLFNLASTLL) constitute a mitochondrion transit peptide. 2 consecutive DNA-binding regions (HMG box) follow at residues 43-111 (PKRP…KEFD) and 116-183 (PKKP…YPLN).

It is found in the mitochondrion. The protein resides in the nucleus. Specific binding to the autonomously replicating sequence 1 (ARS1). Interaction with regulatory regions: probably involved in compacting the mitochondrial genome. It might play a positive role in gene expression and replication. The polypeptide is ARS-binding factor 2, mitochondrial (ABF2) (Saccharomyces cerevisiae (strain ATCC 204508 / S288c) (Baker's yeast)).